The primary structure comprises 288 residues: Eukaryotic translation initiation factor 3 subunit G (288 aa).

Positions 1–35 are disordered; it reads MSRVANNRDWADDEDLEDSNELPQSTTTTNKDGTQ. Residues 11 to 20 show a composition bias toward acidic residues; sequence ADDEDLEDSN. Residues 21-35 show a composition bias toward polar residues; it reads ELPQSTTTTNKDGTQ. The region spanning 208-286 is the RRM domain; the sequence is ATLRVTNVSE…LILRVEFAKK (79 aa).

Belongs to the eIF-3 subunit G family. Component of the eukaryotic translation initiation factor 3 (eIF-3) complex.

It localises to the cytoplasm. RNA-binding component of the eukaryotic translation initiation factor 3 (eIF-3) complex, which is involved in protein synthesis of a specialized repertoire of mRNAs and, together with other initiation factors, stimulates binding of mRNA and methionyl-tRNAi to the 40S ribosome. The eIF-3 complex specifically targets and initiates translation of a subset of mRNAs involved in cell proliferation. This subunit can bind 18S rRNA. This chain is Eukaryotic translation initiation factor 3 subunit G (tif35), found in Botryotinia fuckeliana (strain B05.10) (Noble rot fungus).